A 316-amino-acid polypeptide reads, in one-letter code: Deoxyribonuclease-1-like 1 (316 aa).

An N-terminal signal peptide occupies residues 1-28 (MHSSGGFQKAIHGHALLLLLLLASGAET). Catalysis depends on residues E107 and H158. The cysteines at positions 197 and 234 are disulfide-linked. N271 carries N-linked (GlcNAc...) asparagine glycosylation.

It belongs to the DNase I family.

It is found in the endoplasmic reticulum. The chain is Deoxyribonuclease-1-like 1 (DNASE1L1) from Bos taurus (Bovine).